The sequence spans 122 residues: MARIAGVNIPTNKRVIIALQYIHGIGPKFAQEITEKVGIPTGRRVHELSDAEVLQIREAIDQGYQVEGDLRREVAMNVKRLMDLGCYRGLRHRRSLPVRGQRTHTNARTRKGPAKAIAGKKK.

Positions 97–122 (PVRGQRTHTNARTRKGPAKAIAGKKK) are disordered.

It belongs to the universal ribosomal protein uS13 family. Part of the 30S ribosomal subunit. Forms a loose heterodimer with protein S19. Forms two bridges to the 50S subunit in the 70S ribosome.

Its function is as follows. Located at the top of the head of the 30S subunit, it contacts several helices of the 16S rRNA. In the 70S ribosome it contacts the 23S rRNA (bridge B1a) and protein L5 of the 50S subunit (bridge B1b), connecting the 2 subunits; these bridges are implicated in subunit movement. Contacts the tRNAs in the A and P-sites. The sequence is that of Small ribosomal subunit protein uS13 from Bartonella tribocorum (strain CIP 105476 / IBS 506).